A 540-amino-acid chain; its full sequence is Gamma-cadinene synthase (540 aa).

Mg(2+) contacts are provided by Asp292, Asp296, Asp436, Ser440, and Glu444. Residues 292–296 (DDTYD) carry the DDXXD motif motif.

This sequence belongs to the terpene synthase family. Mg(2+) serves as cofactor. Requires Mn(2+) as cofactor.

It carries out the reaction (2E,6E)-farnesyl diphosphate = (+)-gamma-cadinene + diphosphate. It functions in the pathway secondary metabolite biosynthesis; terpenoid biosynthesis. Functionally, sesquiterpene synthase that catalyzes the cyclization of trans,trans-farnesyl diphosphate (FPP) to gamma cadinene. This chain is Gamma-cadinene synthase (CDS), found in Ocimum basilicum (Sweet basil).